Here is a 992-residue protein sequence, read N- to C-terminus: UvrABC system protein A (992 aa).

Positions 1-11 (MPKNSSTTVSS) are enriched in polar residues. A disordered region spans residues 1–30 (MPKNSSTTVSSAVEAHAGGLASGPGGARSG). 62–69 (GLSGSGKS) contacts ATP. A C4-type; atypical zinc finger spans residues 302-330 (CPNGHEQTVDEIEPRSFSFNNPFGACPEC). ABC transporter domains are found at residues 360–639 (WSLG…TRSV) and 659–988 (PEKG…RFLA). 692–699 (GVSGSGKS) serves as a coordination point for ATP. The segment at 791–817 (CEACAGDGTLKIEMNFLPDVYVPCEVC) adopts a C4-type zinc-finger fold.

The protein belongs to the ABC transporter superfamily. UvrA family. Forms a heterotetramer with UvrB during the search for lesions.

The protein resides in the cytoplasm. Its function is as follows. The UvrABC repair system catalyzes the recognition and processing of DNA lesions. UvrA is an ATPase and a DNA-binding protein. A damage recognition complex composed of 2 UvrA and 2 UvrB subunits scans DNA for abnormalities. When the presence of a lesion has been verified by UvrB, the UvrA molecules dissociate. The chain is UvrABC system protein A from Micrococcus luteus (Micrococcus lysodeikticus).